The following is a 488-amino-acid chain: MELSFTTSIAVATIVFVLFKLATRPKSNKKLLPEPWRLPIIGHMHHLIGTMPHRGVMDLARKYGSLMHLQLGEVSTIVVSSPKWAKEILTTHDITFANRPETLTGEIIAYHNTDIVLAPYGEYWRQLRKLCTLELLSVKKVKSFQSLREEECWNLVQEVKESGSGRPVDLSENIFKMIATILSRAAFGKGIKDQKEFTEIVKEILRQTGGFDVADIFPSKKFLHHLSGKRARLTSIHKKLDNLINNIVAEHPGNNSSKSNETLLDVMLRLKDSVEFPLTADNVKAIILDMFGAGTDTSSATVEWAISELIRCPRAMEKVQAELRQALKGKDKVKEEDIQDLSYLDLVIKETLRLHPPLPLVMPRECRQPVNLAGYDIANKTKLIVNVFAINRDPEYWKDAESFIPERFENSPITVMGAEYEYLPFGAGRRMCPGAALGLANVQLPLANILYHFNWKLPNGASHDQLDMTESFGATVQRKTHLVLVPSF.

Residues 1–6 (MELSFT) are Cytoplasmic-facing. Residues 7-23 (TSIAVATIVFVLFKLAT) traverse the membrane as a helical; Signal-anchor for type II membrane protein segment. At 24–488 (RPKSNKKLLP…KTHLVLVPSF (465 aa)) the chain is on the lumenal side. Residues N255, N260, and N379 are each glycosylated (N-linked (GlcNAc...) asparagine). C432 is a heme binding site.

Belongs to the cytochrome P450 family. Heme is required as a cofactor.

Its subcellular location is the endoplasmic reticulum membrane. It carries out the reaction (+)-(R)-germacrene A + 3 reduced [NADPH--hemoprotein reductase] + 3 O2 = germacra-1(10),4,11(13)-trien-12-oate + 3 oxidized [NADPH--hemoprotein reductase] + 4 H2O + 4 H(+). It functions in the pathway secondary metabolite biosynthesis; terpenoid biosynthesis. In terms of biological role, involved in the biosynthesis of germacrene-derived sesquiterpene lactones. Catalyzes three consecutive oxidations of germacrene A to produce germacrene A acid. Could also catalyze the three-step oxidation of non-natural substrate amorphadiene to artemisinic acid. The protein is Germacrene A hydroxylase of Saussurea costus (Costus).